Consider the following 2170-residue polypeptide: ATP-binding cassette sub-family A member 7 (2170 aa).

The chain crosses the membrane as a helical span at residues 22–42; sequence PIQLVVELLWPLFLFFILVAV. The Extracellular segment spans residues 43-547; that stretch reads RHSHPPLEHH…DVFLRVLSRS (505 aa). Cys75 and Cys222 are oxidised to a cystine. Asn309 carries an N-linked (GlcNAc...) asparagine glycan. 6 consecutive transmembrane segments (helical) span residues 548–568, 591–611, 624–644, 653–673, 679–699, and 733–753; these read LPLF…KAVV, LGWF…LVLV, VVVF…SFLL, LAAA…VLCV, LPLG…GFGC, and AFLL…EAVC. The ABC transporter 1 domain maps to 805-1036; it reads VSIRGLKKHF…LGCGYYLTLV (232 aa). 839–846 lines the ATP pocket; that stretch reads GHNGAGKT. A helical transmembrane segment spans residues 847 to 867; that stretch reads TTLSILSGLFPPSSGSASILG. A disordered region spans residues 1044–1086; that stretch reads THDLKGDTEDPRREKKSGSEGKTADTVLTRDGPHRSSQVPAPD. Residues 1045-1066 show a composition bias toward basic and acidic residues; sequence HDLKGDTEDPRREKKSGSEGKT. Residues 1257–1277 form a helical membrane-spanning segment; sequence IVLPALFVGLALFFTLIVPPF. The Extracellular segment spans residues 1278–1562; that stretch reads GQYPPLQLSP…TLIASSVDVL (285 aa). Residues Cys1370 and Cys1384 are joined by a disulfide bond. Helical transmembrane passes span 1563–1583, 1609–1629, 1646–1666, 1674–1694, 1708–1728, and 1754–1774; these read VSIC…LVLI, FLWD…IFLA, LLLL…SFFF, VVLT…TFVL, ILKQ…LIDM, and IIGK…LITL. The ABC transporter 2 domain occupies 1818–2050; the sequence is LVLRDLTKVY…FGAGHTLTLR (233 aa). 1852-1859 contacts ATP; that stretch reads GVNGAGKT. A disordered region spans residues 2129-2170; it reads QGEEEEGSGQETETREVSTPGLQHPKRVSRFLEDPSSVETVI.

It belongs to the ABC transporter superfamily. ABCA family. Post-translationally, N-glycosylated. As to expression, expressed in blood cells. Also detected in brain and ovary tissues (at protein level). Expressed in platelet.

The protein resides in the cell membrane. It is found in the golgi apparatus membrane. Its subcellular location is the early endosome membrane. It localises to the cell projection. The protein localises to the ruffle membrane. The protein resides in the phagocytic cup. It is found in the cytoplasm. Functionally, ATP-binding cassette (ABC) transporter that plays a role in lipid homeostasis and macrophage-mediated phagocytosis. Binds APOA1 and may function in apolipoprotein-mediated phospholipid efflux from cells. May also mediate cholesterol efflux. May regulate cellular ceramide homeostasis during keratinocyte differentiation. Involved in lipid raft organization and CD1D localization on thymocytes and antigen-presenting cells, which plays an important role in natural killer T-cell development and activation. Plays a role in phagocytosis of apoptotic cells by macrophages. Macrophage phagocytosis is stimulated by APOA1 or APOA2, probably by stabilization of ABCA7. Also involved in phagocytic clearance of amyloid-beta by microglia cells and macrophages. Further limits amyloid-beta production by playing a role in the regulation of amyloid-beta A4 precursor protein (APP) endocytosis and/or processing. This is ATP-binding cassette sub-family A member 7 (Abca7) from Rattus norvegicus (Rat).